The sequence spans 242 residues: Transcription factor Spi-C (242 aa).

Residues 112–195 (LRLFEYLFES…IRRKLTYQFS (84 aa)) constitute a DNA-binding region (ETS).

Belongs to the ETS family. Binds DNA as a monomer. Expressed in lymphoid tissues, including spleen, bone marrow and thymus. According to PubMed:19037245, highly expressed in red pulp macrophages and, at lower, levels in B-cells, but not in other cells, including, monocytes, dendritic cells and other tissue macrophages. According to PubMed:10464163 expressed in pre- and mature B-cells but not in immature B-cells; according to PubMed:10187812 not expressed in pre- but predominantly in mature B-cells and at lower levels in macrophages.

The protein resides in the nucleus. Functionally, controls the development of red pulp macrophages required for red blood cells recycling and iron homeostasis. Transcription factor that binds to the PU-box, a purine-rich DNA sequence (5'-GAGGA[AT]-3') that can act as a lymphoid-specific enhancer. Regulates VCAM1 gene expression. This is Transcription factor Spi-C (Spic) from Mus musculus (Mouse).